Reading from the N-terminus, the 303-residue chain is ATP synthase subunit a (303 aa).

A run of 6 helical transmembrane segments spans residues 59-79 (HTVM…IWGN), 122-142 (FLLT…VPWM), 148-168 (NLAV…VAGI), 181-201 (TGGV…LGLF), 220-240 (IVYF…VAAV), and 244-264 (FAFA…YVFA). Residues 281–290 (HDDHGHDHPE) show a composition bias toward basic and acidic residues. Residues 281 to 303 (HDDHGHDHPEAGPSHDQGKAHHA) form a disordered region.

This sequence belongs to the ATPase A chain family. In terms of assembly, F-type ATPases have 2 components, CF(1) - the catalytic core - and CF(0) - the membrane proton channel. CF(1) has five subunits: alpha(3), beta(3), gamma(1), delta(1), epsilon(1). CF(0) has three main subunits: a(1), b(2) and c(9-12). The alpha and beta chains form an alternating ring which encloses part of the gamma chain. CF(1) is attached to CF(0) by a central stalk formed by the gamma and epsilon chains, while a peripheral stalk is formed by the delta and b chains.

Its subcellular location is the cell inner membrane. Its function is as follows. Key component of the proton channel; it plays a direct role in the translocation of protons across the membrane. The chain is ATP synthase subunit a from Myxococcus xanthus (strain DK1622).